We begin with the raw amino-acid sequence, 186 residues long: Transcriptional repressor NrdR (186 aa).

The segment at 1–24 (MRCPYCGGLDTQVKDSRPSDDASA) is disordered. A zinc finger lies at 3–34 (CPYCGGLDTQVKDSRPSDDASAIRRRRICPDC). Residues 12-24 (QVKDSRPSDDASA) show a composition bias toward basic and acidic residues. Residues 49–139 (LTVVKRSGRR…VYKNFREARD (91 aa)) enclose the ATP-cone domain. A disordered region spans residues 146 to 186 (RLNGAGRPGGEPEPPDEAAPGPAAAPGEGGEAPARRARSRA).

It belongs to the NrdR family. Zn(2+) is required as a cofactor.

In terms of biological role, negatively regulates transcription of bacterial ribonucleotide reductase nrd genes and operons by binding to NrdR-boxes. The chain is Transcriptional repressor NrdR from Methylobacterium sp. (strain 4-46).